The following is a 202-amino-acid chain: MGNSKSGALSKEILEELQLNTKFTEEELSSWYQSFLKECPSGRITRQEFQTIYSKFFPEADPKAYAQHVFRSFDANSDGTLDFKEYVIALHMTSAGKTNQKLEWAFSLYDVDGNGTISKNEVLEIVTAIFKMISPEDTKHLPEDENTPEKRAEKIWGFFGKKDDDKLTEKEFIEGTLANKEILRLIQFEPQKVKEKLKEKKL.

The N-myristoyl glycine moiety is linked to residue Gly-2. EF-hand domains follow at residues 24-59 (TEEELSSWYQSFLKECPSGRITRQEFQTIYSKFFPE), 61-96 (DPKAYAQHVFRSFDANSDGTLDFKEYVIALHMTSAG), 97-132 (KTNQKLEWAFSLYDVDGNGTISKNEVLEIVTAIFKM), and 147-182 (TPEKRAEKIWGFFGKKDDDKLTEKEFIEGTLANKEI). Cysteine sulfenic acid (-SOH) is present on Cys-39. Asp-74, Asn-76, Asp-78, Thr-80, Glu-85, Asp-110, Asp-112, Asn-114, Thr-116, and Glu-121 together coordinate Ca(2+). The tract at residues 189–192 (EPQK) is interaction with GRK1. A modulates EF-hand 3 domain calcium binding affinity region spans residues 191–202 (QKVKEKLKEKKL).

Belongs to the recoverin family. Homodimer; disulfide-linked. Homodimerization is caused by prolonged intense illumination. May form a complex composed of RHO, GRK1 and RCVRN in a Ca(2+)-dependent manner; RCVRN prevents the interaction between GRK1 and RHO. Interacts (via C-terminus) with GRK1 (via N-terminus); the interaction is Ca(2+)-dependent. Post-translationally, the N-terminal glycine is linked to one of four different types of acyl groups. The most abundant is myristoleate (14:1), but 14:0, 14:2, and 12:0 acyl residues are also present. The Ca(2+) induced exposure of the myristoyl group, known as the calcium-myristoyl switch, promotes RCVRN binding to the photoreceptor cell membranes only when intracellular Ca(2+) concentration is high. Oxidation on Cys-39 occurs in response to prolonged intense illumination and results in the formation of disulfide homodimers, and to a lesser extent disulfide-linked heterodimers. In terms of tissue distribution, expressed in the retina (at protein level). Expressed in the pineal gland (at protein level).

Its subcellular location is the photoreceptor inner segment. The protein resides in the cell projection. The protein localises to the cilium. It localises to the photoreceptor outer segment. It is found in the photoreceptor outer segment membrane. Its subcellular location is the perikaryon. In terms of biological role, acts as a calcium sensor and regulates phototransduction of cone and rod photoreceptor cells. Modulates light sensitivity of cone photoreceptor in dark and dim conditions. In response to high Ca(2+) levels induced by low light levels, prolongs RHO/rhodopsin activation in rod photoreceptor cells by binding to and inhibiting GRK1-mediated phosphorylation of RHO/rhodopsin. Plays a role in scotopic vision/enhances vision in dim light by enhancing signal transfer between rod photoreceptors and rod bipolar cells. Improves rod photoreceptor sensitivity in dim light and mediates response of rod photoreceptors to facilitate detection of change and motion in bright light. This is Recoverin (RCVRN) from Bos taurus (Bovine).